We begin with the raw amino-acid sequence, 381 residues long: Succinate--CoA ligase [ADP-forming] subunit beta (381 aa).

Residues 9 to 236 (KTIFADAGIP…ESYEDDLERK (228 aa)) form the ATP-grasp domain. ATP is bound by residues K45, 52 to 54 (GRG), E91, V94, and E99. Mg(2+)-binding residues include N191 and D205. Residues N256 and 313–315 (GIT) contribute to the substrate site.

Belongs to the succinate/malate CoA ligase beta subunit family. In terms of assembly, heterotetramer of two alpha and two beta subunits. It depends on Mg(2+) as a cofactor.

The enzyme catalyses succinate + ATP + CoA = succinyl-CoA + ADP + phosphate. The catalysed reaction is GTP + succinate + CoA = succinyl-CoA + GDP + phosphate. The protein operates within carbohydrate metabolism; tricarboxylic acid cycle; succinate from succinyl-CoA (ligase route): step 1/1. Its function is as follows. Succinyl-CoA synthetase functions in the citric acid cycle (TCA), coupling the hydrolysis of succinyl-CoA to the synthesis of either ATP or GTP and thus represents the only step of substrate-level phosphorylation in the TCA. The beta subunit provides nucleotide specificity of the enzyme and binds the substrate succinate, while the binding sites for coenzyme A and phosphate are found in the alpha subunit. The protein is Succinate--CoA ligase [ADP-forming] subunit beta of Halorubrum lacusprofundi (strain ATCC 49239 / DSM 5036 / JCM 8891 / ACAM 34).